A 328-amino-acid chain; its full sequence is Methionyl-tRNA formyltransferase (328 aa).

110–113 (SLLP) is a (6S)-5,6,7,8-tetrahydrofolate binding site.

This sequence belongs to the Fmt family.

The enzyme catalyses L-methionyl-tRNA(fMet) + (6R)-10-formyltetrahydrofolate = N-formyl-L-methionyl-tRNA(fMet) + (6S)-5,6,7,8-tetrahydrofolate + H(+). Attaches a formyl group to the free amino group of methionyl-tRNA(fMet). The formyl group appears to play a dual role in the initiator identity of N-formylmethionyl-tRNA by promoting its recognition by IF2 and preventing the misappropriation of this tRNA by the elongation apparatus. In Prochlorococcus marinus (strain MIT 9515), this protein is Methionyl-tRNA formyltransferase.